The sequence spans 149 residues: Deoxyuridine 5'-triphosphate nucleotidohydrolase (149 aa).

Residues 68-70, N81, and 85-87 each bind substrate; these read RSG and LID.

Belongs to the dUTPase family. Mg(2+) is required as a cofactor.

It catalyses the reaction dUTP + H2O = dUMP + diphosphate + H(+). The protein operates within pyrimidine metabolism; dUMP biosynthesis; dUMP from dCTP (dUTP route): step 2/2. Functionally, this enzyme is involved in nucleotide metabolism: it produces dUMP, the immediate precursor of thymidine nucleotides and it decreases the intracellular concentration of dUTP so that uracil cannot be incorporated into DNA. In Nitrosospira multiformis (strain ATCC 25196 / NCIMB 11849 / C 71), this protein is Deoxyuridine 5'-triphosphate nucleotidohydrolase.